The chain runs to 654 residues: Translation factor GUF1, mitochondrial (654 aa).

Residues 57–237 (ENYRNFSIVA…SVIKNIPSPV (181 aa)) enclose the tr-type G domain. Residues 66–73 (AHVDHGKS), 130–134 (DTPGH), and 184–187 (NKID) contribute to the GTP site.

The protein belongs to the TRAFAC class translation factor GTPase superfamily. Classic translation factor GTPase family. LepA subfamily.

The protein localises to the mitochondrion inner membrane. It carries out the reaction GTP + H2O = GDP + phosphate + H(+). Functionally, promotes mitochondrial protein synthesis. May act as a fidelity factor of the translation reaction, by catalyzing a one-codon backward translocation of tRNAs on improperly translocated ribosomes. Binds to mitochondrial ribosomes in a GTP-dependent manner. This Candida dubliniensis (strain CD36 / ATCC MYA-646 / CBS 7987 / NCPF 3949 / NRRL Y-17841) (Yeast) protein is Translation factor GUF1, mitochondrial.